We begin with the raw amino-acid sequence, 210 residues long: Guanylate kinase (210 aa).

Residues 6–184 (GTLYIISAPS…ALQDLKCIIQ (179 aa)) enclose the Guanylate kinase-like domain. An ATP-binding site is contributed by 13–20 (APSGAGKT).

It belongs to the guanylate kinase family.

Its subcellular location is the cytoplasm. The catalysed reaction is GMP + ATP = GDP + ADP. Essential for recycling GMP and indirectly, cGMP. In Nitrosospira multiformis (strain ATCC 25196 / NCIMB 11849 / C 71), this protein is Guanylate kinase.